The primary structure comprises 261 residues: NAD-capped RNA hydrolase NudC (261 aa).

Arginine 69 contributes to the substrate binding site. Residues cysteine 98 and cysteine 101 each contribute to the Zn(2+) site. Position 111 (glutamate 111) interacts with substrate. 2 residues coordinate Zn(2+): cysteine 116 and cysteine 119. Substrate is bound at residue tyrosine 124. The 124-residue stretch at 125-248 folds into the Nudix hydrolase domain; sequence PQIAPCIIVA…TVARRLIEDT (124 aa). Residues alanine 158, glutamate 174, and glutamate 178 each contribute to the a divalent metal cation site. The Nudix box motif lies at 159 to 180; that stretch reads GFVEVGETLEQTVAREVMEESS. Position 192–199 (192–199) interacts with substrate; sequence QPWPFPQS. Glutamate 219 contributes to the a divalent metal cation binding site. Alanine 241 serves as a coordination point for substrate.

The protein belongs to the Nudix hydrolase family. NudC subfamily. In terms of assembly, homodimer. Mg(2+) is required as a cofactor. Requires Mn(2+) as cofactor. It depends on Zn(2+) as a cofactor.

The catalysed reaction is a 5'-end NAD(+)-phospho-ribonucleoside in mRNA + H2O = a 5'-end phospho-adenosine-phospho-ribonucleoside in mRNA + beta-nicotinamide D-ribonucleotide + 2 H(+). The enzyme catalyses NAD(+) + H2O = beta-nicotinamide D-ribonucleotide + AMP + 2 H(+). It carries out the reaction NADH + H2O = reduced beta-nicotinamide D-ribonucleotide + AMP + 2 H(+). Functionally, mRNA decapping enzyme that specifically removes the nicotinamide adenine dinucleotide (NAD) cap from a subset of mRNAs by hydrolyzing the diphosphate linkage to produce nicotinamide mononucleotide (NMN) and 5' monophosphate mRNA. The NAD-cap is present at the 5'-end of some mRNAs and stabilizes RNA against 5'-processing. Has preference for mRNAs with a 5'-end purine. Catalyzes the hydrolysis of a broad range of dinucleotide pyrophosphates. The chain is NAD-capped RNA hydrolase NudC from Erwinia tasmaniensis (strain DSM 17950 / CFBP 7177 / CIP 109463 / NCPPB 4357 / Et1/99).